The sequence spans 512 residues: Pentatricopeptide repeat-containing protein At1g64583, mitochondrial (512 aa).

A mitochondrion-targeting transit peptide spans 1 to 34 (MRRLIVTGIATSTAKGFRRVVNPNLLGGGAAARA). PPR repeat units follow at residues 70 to 104 (SIVDFTRLLTATANLRRYETVIYFSQKMELYGISH), 105 to 139 (DLYSFTILIHCFCRCSRLSFALSVLGKMMKLGYEP), 140 to 174 (SIVTFGSLLHGFCLVNRIGDAFSLVILMVKSGYEP), 175 to 209 (NVVVYNTLIDGLCKNGELNIALELLNEMEKKGLGA), 210 to 244 (DVVTYNTLLTGLCYSGRWSDAARMLRDMMKRSINP), 245 to 279 (DVVTFTALIDVFVKQGNLDEAQELYKEMIQSSVDP), 280 to 314 (NNVTYNSIINGLCMHGRLYDAKKTFDLMASKGCFP), 315 to 349 (NVVTYNTLISGFCKFRMVDEGMKLFQRMSCEGFNA), 350 to 384 (DIFTYNTLIHGYCQVGKLRVALDIFCWMVSRRVTP), 385 to 415 (DIITHCILLHGLCVNGEIESALVKFDDMRES), 420 to 454 (GIVAYNIMIHGLCKADKVEKAWELFCRLPVEGVKP), and 455 to 489 (DARTYTIMILGLCKNGPRREADELIRRMKEEGIIC).

The protein belongs to the PPR family. P subfamily.

The protein localises to the mitochondrion. The polypeptide is Pentatricopeptide repeat-containing protein At1g64583, mitochondrial (Arabidopsis thaliana (Mouse-ear cress)).